The primary structure comprises 382 residues: L-arabinitol 4-dehydrogenase (382 aa).

Zn(2+)-binding residues include Cys-55, His-80, Glu-81, Cys-110, Cys-113, Cys-116, Cys-124, and Glu-165. Residues 192-193 (PI), Asp-213, Arg-218, Ile-293, and 317-319 (QYR) each bind NAD(+).

Belongs to the zinc-containing alcohol dehydrogenase family. As to quaternary structure, homotetramer. It depends on Zn(2+) as a cofactor.

It catalyses the reaction L-arabinitol + NAD(+) = L-xylulose + NADH + H(+). It functions in the pathway carbohydrate degradation; L-arabinose degradation via L-arabinitol; D-xylulose 5-phosphate from L-arabinose (fungal route): step 2/5. Functionally, catalyzes the NAD-dependent oxidation of L-arabinitol to L-xylulose in the fungal L-arabinose catabolic pathway. L-arabinose catabolism is important for using plant material as a carbon source. Also active on ribitol and xylitol. Not active with NADP as cosubstrate. The sequence is that of L-arabinitol 4-dehydrogenase (ladA) from Aspergillus oryzae (Yellow koji mold).